Here is a 283-residue protein sequence, read N- to C-terminus: 2,3,4,5-tetrahydropyridine-2,6-dicarboxylate N-succinyltransferase (283 aa).

2 residues coordinate substrate: R107 and D144.

Belongs to the transferase hexapeptide repeat family. Homotrimer.

It localises to the cytoplasm. It catalyses the reaction (S)-2,3,4,5-tetrahydrodipicolinate + succinyl-CoA + H2O = (S)-2-succinylamino-6-oxoheptanedioate + CoA. It functions in the pathway amino-acid biosynthesis; L-lysine biosynthesis via DAP pathway; LL-2,6-diaminopimelate from (S)-tetrahydrodipicolinate (succinylase route): step 1/3. The protein is 2,3,4,5-tetrahydropyridine-2,6-dicarboxylate N-succinyltransferase of Rhodospirillum rubrum (strain ATCC 11170 / ATH 1.1.1 / DSM 467 / LMG 4362 / NCIMB 8255 / S1).